Here is an 888-residue protein sequence, read N- to C-terminus: ETO1-like protein 1 (888 aa).

One can recognise a BTB domain in the interval 180–280; that stretch reads KNVVFKIGEE…ACDRELASLI (101 aa). TPR repeat units lie at residues 381–414, 441–477, 511–544, 637–670, and 711–744; these read VLGFHRLGCMRLLRKEYREAEEAFETAFNLGHVY, SSVSPPLGWMYQERSFYCEGDKKLEDLEKATELDPTL, LECLEIRFCLYLGMDDYEAALRDIQAALTLCPDY, HERLVYEGWILYDTGHCEEGLQKAKESIGIKRSF, and GQALNNLGSVYVDCEKLDLAADCYINALKVRHTR. Residues 755–793 are a coiled coil; that stretch reads LRNDKAAAYEEMTRLIEKAQNNASAYEKRSEYCDRELAK. TPR repeat units follow at residues 807-840 and 842-873; these read VYPYRYRAAVLMDSRKEREAITELSRAIAFKADL and LLHLRAAFHEHIGDVTSALRDCRAALSVDPNH.

This sequence belongs to the ETO1 family. As to quaternary structure, interacts with the C-terminal domain of ACS4, ACS5 and ACS9. Predominantly expressed in flowers.

Its pathway is protein modification; protein ubiquitination. In terms of biological role, possible regulator of the ethylene pathway, which acts by regulating the stability of 1-aminocyclopropane-1-carboxylate synthase (ACS) enzymes. May act as a substrate-specific adapter that connects ACS enzymes, such as ACS5, to ubiquitin ligase complexes, leading to proteasomal degradation of ACS enzymes. The protein is ETO1-like protein 1 (EOL1) of Arabidopsis thaliana (Mouse-ear cress).